A 382-amino-acid chain; its full sequence is Putative UDP-sugar transporter DDB_G0278631 (382 aa).

The next 7 helical transmembrane spans lie at 117–137, 183–203, 211–231, 234–254, 264–284, 302–322, and 354–374; these read FSASNFLLFNQMVVTIVILHI, MYSALKRLVAVVILVMEYFIL, IIASVVVMVIGAVVAGITDLS, SLGYSLVLLSCIFQASYLIYV, YDMLYYNSVLSLPITIFLMIV, FQAYFILSIFLGFFLNFCIFF, and IIIHPINILGLIINIIGSIWY.

The protein belongs to the TPT transporter family. SLC35D subfamily.

The protein localises to the membrane. May be nvolved in the import of UDP-sugars. The sequence is that of Putative UDP-sugar transporter DDB_G0278631 from Dictyostelium discoideum (Social amoeba).